The sequence spans 300 residues: Transcription initiation factor IIB 1 (300 aa).

Residues G3 to E34 form a TFIIB-type zinc finger. C7, C10, C26, and C29 together coordinate Zn(2+). 2 consecutive repeat copies span residues S114–L197 and D210–E291.

The protein belongs to the TFIIB family.

In terms of biological role, stabilizes TBP binding to an archaeal box-A promoter. Also responsible for recruiting RNA polymerase II to the pre-initiation complex (DNA-TBP-TFIIB). This chain is Transcription initiation factor IIB 1, found in Thermococcus kodakarensis (strain ATCC BAA-918 / JCM 12380 / KOD1) (Pyrococcus kodakaraensis (strain KOD1)).